The chain runs to 334 residues: Phospholipase A1 2 (334 aa).

The N-terminal stretch at 1–23 is a signal peptide; the sequence is MMNLKYLLFFCLVQALHYCYAYG. Positions 24–33 are excised as a propeptide; the sequence is DPSLSNELDR. Cysteine 37 and cysteine 120 form a disulfide bridge. The active-site Nucleophile is the serine 170. Aspartate 198 functions as the Charge relay system in the catalytic mechanism. Intrachain disulfides connect cysteine 209–cysteine 214 and cysteine 252–cysteine 261. Histidine 263 serves as the catalytic Charge relay system. 3 disulfide bridges follow: cysteine 278-cysteine 302, cysteine 279-cysteine 327, and cysteine 295-cysteine 300.

Belongs to the AB hydrolase superfamily. Lipase family. Not glycosylated. In terms of tissue distribution, expressed by the venom gland.

It localises to the secreted. It carries out the reaction a 1,2-diacyl-sn-glycero-3-phosphocholine + H2O = a 2-acyl-sn-glycero-3-phosphocholine + a fatty acid + H(+). Its function is as follows. Catalyzes the hydrolysis of phosphatidylcholine with phospholipase A1 activity (6.3 U/ml). May act as an allergen and induce hemolytic activity. This Vespa affinis (Lesser banded hornet) protein is Phospholipase A1 2.